The primary structure comprises 260 residues: MADWNPALYTRFEDERTRPAAELLARVPLEAPRLAIDLGCGPGNSTALIAARFPDAEVIGLDTSPAMLESARARLPRLAFALADAATWTPERAPDLIYANAVLQWLPDHATLLPRLFGLLAPGGVLAVQMPDNLAEPTHRLMRAVAASGPWAAAIGDPAVAGRLGRMLEPAAYYDLLAPAAAEVDVWRTAYHHRMADAAAIVDWVRATGLRPFLDPLDPEHRAGFLDAYTRAIDGAYPPRSDGRRLLAFPRVFVVARKAS.

It belongs to the methyltransferase superfamily. Tam family.

The protein localises to the cytoplasm. It catalyses the reaction trans-aconitate + S-adenosyl-L-methionine = (E)-3-(methoxycarbonyl)pent-2-enedioate + S-adenosyl-L-homocysteine. Functionally, catalyzes the S-adenosylmethionine monomethyl esterification of trans-aconitate. This is Trans-aconitate 2-methyltransferase from Methylobacterium radiotolerans (strain ATCC 27329 / DSM 1819 / JCM 2831 / NBRC 15690 / NCIMB 10815 / 0-1).